Here is a 389-residue protein sequence, read N- to C-terminus: Major outer membrane porin (389 aa).

An N-terminal signal peptide occupies residues 1–23 (MKKLLKSALLSAAFAGSVGSLQA).

The protein belongs to the chlamydial porin (CP) (TC 1.B.2) family. As to quaternary structure, part of a disulfide cross-linked outer membrane complex (COMC) composed of the major outer membrane porin (MOMP), the small cysteine-rich protein (OmcA) and the large cysteine-rich periplasmic protein (OmcB).

It is found in the cell outer membrane. In elementary bodies (EBs, the infectious stage, which is able to survive outside the host cell) provides the structural integrity of the outer envelope through disulfide cross-links with the small cysteine-rich protein and the large cysteine-rich periplasmic protein. It has been described in publications as the Sarkosyl-insoluble COMC (Chlamydia outer membrane complex), and serves as the functional equivalent of peptidoglycan. In terms of biological role, permits diffusion of specific solutes through the outer membrane. The protein is Major outer membrane porin (ompA) of Chlamydia pneumoniae (Chlamydophila pneumoniae).